The chain runs to 2800 residues: Probable serine/threonine-protein kinase roco5 (2800 aa).

Basic and acidic residues predominate over residues 1–61 (MEVIKKEKKD…EKEKDKEKDG (61 aa)). 3 disordered regions span residues 1–92 (MEVI…SAQS), 123–225 (TTTT…SPVD), and 417–437 (GINS…SSGI). Residues 77-86 (PTPPPPPPPS) show a composition bias toward pro residues. 2 stretches are compositionally biased toward low complexity: residues 123 to 134 (TTTTTTTTSSNN) and 143 to 170 (NNNT…SSNN). Residues 176–190 (INVTSLDSGGNNNAS) show a composition bias toward polar residues. A compositionally biased stretch (basic and acidic residues) spans 194-218 (ISNEHSPKNRKEKEKEKDKDNKEDS). A DH domain is found at 227 to 508 (NRRKLVEGFM…VQVVKDIVNE (282 aa)). Positions 417–429 (GINSANSNNNNNN) are enriched in low complexity. The PH domain occupies 540-649 (KFLKEGILIE…WFQVLSQASL (110 aa)). LRR repeat units follow at residues 777–800 (NKSI…ALGD), 805–832 (NHSL…GILS), 834–856 (PSIT…HISK), and 861–885 (NQTL…IIDQ). Residues 926–946 (KQLQVNQKSTTPSTSTSTTSS) are disordered. A compositionally biased stretch (low complexity) spans 934–946 (STTPSTSTSTTSS). LRR repeat units follow at residues 971–984 (LNKL…SRRI), 985–1007 (SDLK…ILKE), 1008–1031 (LKNL…ISEM), 1033–1056 (ELKL…TLCK), 1058–1077 (NHLD…SLSQ), 1078–1101 (LVNL…IFTR), 1128–1151 (AIKA…IGSI), 1152–1174 (SSLI…IGKL), 1175–1197 (SSLQ…LSQL), and 1199–1222 (TLKV…KISI). The region spanning 1244–1464 (KEKPCMRMKL…NHIVKLGKAE (221 aa)) is the Roc domain. GTP contacts are provided by residues 1257–1264 (GQENVGKT), 1348–1352 (DFAGQ), and 1407–1410 (THLD). The region spanning 1473–1604 (RSYFQLENLI…KFEIVHPLPD (132 aa)) is the COR 1 domain. Disordered regions lie at residues 1605–1665 (PKAT…SLLN) and 1688–1711 (DQST…FSDS). Low complexity-rich tracts occupy residues 1610–1645 (SSSS…SSTT), 1653–1665 (RTNS…SLLN), and 1688–1707 (DQST…SSNN). Residues 1717–1790 (KSSTKHLVPI…VKEFWKNGLL (74 aa)) enclose the COR 2 domain. Positions 1886–2008 (SQQQHHQQQQ…LNPDSTSSSN (123 aa)) are enriched in low complexity. Disordered regions lie at residues 1886 to 2011 (SQQQ…NETS) and 2050 to 2070 (RNTN…SSIV). Over residues 2050 to 2059 (RNTNKPKING) the composition is skewed to polar residues. The region spanning 2175–2440 (LEIIEKVGEG…PTFIDIHSRL (266 aa)) is the Protein kinase domain. ATP-binding positions include 2181 to 2189 (VGEGGFGIV) and Lys2202. Catalysis depends on Asp2300, which acts as the Proton acceptor. Low complexity-rich tracts occupy residues 2452-2490 (TTTN…GTTS), 2583-2654 (LKTP…SPIS), 2669-2685 (TTQT…PNPT), and 2694-2704 (SSLSSNSINKP). Disordered stretches follow at residues 2452 to 2498 (TTTN…HPQL) and 2544 to 2800 (AGGN…AIPK). Over residues 2705–2723 (PSKPLPTPGGVTSPPPPPT) the composition is skewed to pro residues. Polar residues predominate over residues 2730–2756 (IKFNSISAGNKTIGQSSTLPSSTLKQF). Residues 2757 to 2787 (TANNNTSPSGSSSLPNSTVSSPSSSFLLRPT) show a composition bias toward low complexity.

This sequence belongs to the protein kinase superfamily. TKL Ser/Thr protein kinase family. ROCO subfamily.

The enzyme catalyses L-seryl-[protein] + ATP = O-phospho-L-seryl-[protein] + ADP + H(+). It catalyses the reaction L-threonyl-[protein] + ATP = O-phospho-L-threonyl-[protein] + ADP + H(+). In terms of biological role, may act as a serine/threonine-protein kinase and guanine-nucleotide releasing factor. The sequence is that of Probable serine/threonine-protein kinase roco5 (roco5) from Dictyostelium discoideum (Social amoeba).